We begin with the raw amino-acid sequence, 202 residues long: Glycerol-3-phosphate acyltransferase (202 aa).

4 consecutive transmembrane segments (helical) span residues 2 to 22 (ANLL…AVVV), 85 to 105 (LAMV…HRFA), 119 to 139 (AINP…AFFF), and 158 to 178 (VLME…ILLI).

It belongs to the PlsY family. In terms of assembly, probably interacts with PlsX.

The protein resides in the cell inner membrane. It catalyses the reaction an acyl phosphate + sn-glycerol 3-phosphate = a 1-acyl-sn-glycero-3-phosphate + phosphate. It functions in the pathway lipid metabolism; phospholipid metabolism. Catalyzes the transfer of an acyl group from acyl-phosphate (acyl-PO(4)) to glycerol-3-phosphate (G3P) to form lysophosphatidic acid (LPA). This enzyme utilizes acyl-phosphate as fatty acyl donor, but not acyl-CoA or acyl-ACP. This Cupriavidus pinatubonensis (strain JMP 134 / LMG 1197) (Cupriavidus necator (strain JMP 134)) protein is Glycerol-3-phosphate acyltransferase.